The primary structure comprises 445 residues: Tripartite motif-containing protein 43B (445 aa).

Residues 16–57 (CSICQGIFMNPVYLKCGHKFCEACLLLFQEDIKFPAYCPMCM) form an RING-type zinc finger. Residues 88–129 (SEEHKCVTHKAKKMIFCDKSKILLCHLCSDSQEHSGHTHCSI) form a B box-type zinc finger. Zn(2+)-binding residues include cysteine 93, histidine 96, cysteine 115, and histidine 121. A B30.2/SPRY domain is found at 271–445 (RLRAHSIPGL…VRPFFSAVYT (175 aa)).

It belongs to the TRIM/RBCC family.

The chain is Tripartite motif-containing protein 43B from Mus musculus (Mouse).